The sequence spans 661 residues: UvrABC system protein B (661 aa).

A Helicase ATP-binding domain is found at 26 to 181 (KGIQEGRKHQ…LLRKLVDIQY (156 aa)). Residue 39 to 46 (GATGTGKT) participates in ATP binding. Positions 92-115 (YYDYYQPEAYVPQTDTFIEKDASI) match the Beta-hairpin motif. Positions 430–596 (QIDDLIGEIQ…TINKEIRDVI (167 aa)) constitute a Helicase C-terminal domain. The UVR domain occupies 625–660 (QKVVEQMEHEMKEAARALDFERAAELRDLLLELKAE).

The protein belongs to the UvrB family. As to quaternary structure, forms a heterotetramer with UvrA during the search for lesions. Interacts with UvrC in an incision complex.

The protein resides in the cytoplasm. In terms of biological role, the UvrABC repair system catalyzes the recognition and processing of DNA lesions. A damage recognition complex composed of 2 UvrA and 2 UvrB subunits scans DNA for abnormalities. Upon binding of the UvrA(2)B(2) complex to a putative damaged site, the DNA wraps around one UvrB monomer. DNA wrap is dependent on ATP binding by UvrB and probably causes local melting of the DNA helix, facilitating insertion of UvrB beta-hairpin between the DNA strands. Then UvrB probes one DNA strand for the presence of a lesion. If a lesion is found the UvrA subunits dissociate and the UvrB-DNA preincision complex is formed. This complex is subsequently bound by UvrC and the second UvrB is released. If no lesion is found, the DNA wraps around the other UvrB subunit that will check the other stand for damage. The chain is UvrABC system protein B from Bacillus velezensis (strain DSM 23117 / BGSC 10A6 / LMG 26770 / FZB42) (Bacillus amyloliquefaciens subsp. plantarum).